A 668-amino-acid chain; its full sequence is MLKQLSRSLGIRSSPIVANLIRSKQVCTRGFHISLVKQNTSSKVNEITDITSDSLKVKEDAAGSDLPSTKTDKKSKSESFQPVKFEDFKGKGYIHDSIINSLHKNDFKELTPIQQKSLVPIFNTEKGLVCRAKTGTGKTLAFAVPTLQYAYKNRGKGVSTVVLVPTRDLAFQIEEEYRKLISHLKYNERPNLELIIGGQRTSFNPRRPAEIVIATPGRLEKELQTDRKLAKCFSNVTYRIYDEADRLLDVGFESVLNEIDGLLYKVRTTPKPIKSLLFSATVDEAISEFSKKHIHPEYEFLNTVTKDDLEIPENIHQQLIECTDGIDKVNVSLSELHGIMKQHNDYKVIVFLPTKTAVDWFYEYITNALDDELFELFSKPPRVFMLHGGRSVRQRSAALKGFKVAKKGILISTDVAARGIDVKDVTNVMQMFPSVEIADYIHKVGRTGRAGKKGKASLFATPAELPYVSLLKRKRKVKFQEVIQSEKLNSSNIIDQIESPLDSTKEFLATMVGYLQQLQSAHRLDYDSLVIENMELYRKLVRDDKAMLESRILSRIGKGISAHVKRRYFTRTRYQSHDDAEFDSYSDFSRSGMSQRPRSNDRSSKMTFNGRGKYGNNRNNDWSYQNKNRYNNNNNRQTERSYDSDRKSHNDWKYEKKFEHRRIRDHDE.

Residues 1 to 38 (MLKQLSRSLGIRSSPIVANLIRSKQVCTRGFHISLVKQ) constitute a mitochondrion transit peptide. The Q motif signature appears at 87-115 (DFKGKGYIHDSIINSLHKNDFKELTPIQQ). In terms of domain architecture, Helicase ATP-binding spans 119–300 (VPIFNTEKGL…KKHIHPEYEF (182 aa)). Residue 132-139 (AKTGTGKT) participates in ATP binding. Residues 242–245 (DEAD) carry the DEAD box motif. The Helicase C-terminal domain maps to 332 to 501 (SLSELHGIMK…NIIDQIESPL (170 aa)). The tract at residues 585-668 (YSDFSRSGMS…EHRRIRDHDE (84 aa)) is disordered. Over residues 586–597 (SDFSRSGMSQRP) the composition is skewed to polar residues. The span at 609-636 (NGRGKYGNNRNNDWSYQNKNRYNNNNNR) shows a compositional bias: low complexity. Positions 637-668 (QTERSYDSDRKSHNDWKYEKKFEHRRIRDHDE) are enriched in basic and acidic residues.

Belongs to the DEAD box helicase family. DDX18/HAS1 subfamily.

Its subcellular location is the mitochondrion matrix. The enzyme catalyses ATP + H2O = ADP + phosphate + H(+). In terms of biological role, ATP-dependent RNA helicase required for mitochondrial splicing of group I and II introns. Also required for efficient mitochondrial translation. The polypeptide is ATP-dependent RNA helicase MSS116, mitochondrial (MSS116) (Candida albicans (strain SC5314 / ATCC MYA-2876) (Yeast)).